We begin with the raw amino-acid sequence, 259 residues long: ATP synthase subunit b 3 (259 aa).

The helical transmembrane segment at Trp-5–Phe-27 threads the bilayer.

Belongs to the ATPase B chain family. As to quaternary structure, F-type ATPases have 2 components, F(1) - the catalytic core - and F(0) - the membrane proton channel. F(1) has five subunits: alpha(3), beta(3), gamma(1), delta(1), epsilon(1). F(0) has three main subunits: a(1), b(2) and c(10-14). The alpha and beta chains form an alternating ring which encloses part of the gamma chain. F(1) is attached to F(0) by a central stalk formed by the gamma and epsilon chains, while a peripheral stalk is formed by the delta and b chains.

Its subcellular location is the cell inner membrane. In terms of biological role, f(1)F(0) ATP synthase produces ATP from ADP in the presence of a proton or sodium gradient. F-type ATPases consist of two structural domains, F(1) containing the extramembraneous catalytic core and F(0) containing the membrane proton channel, linked together by a central stalk and a peripheral stalk. During catalysis, ATP synthesis in the catalytic domain of F(1) is coupled via a rotary mechanism of the central stalk subunits to proton translocation. Functionally, component of the F(0) channel, it forms part of the peripheral stalk, linking F(1) to F(0). This chain is ATP synthase subunit b 3, found in Beijerinckia indica subsp. indica (strain ATCC 9039 / DSM 1715 / NCIMB 8712).